Reading from the N-terminus, the 225-residue chain is NAD(P)H-quinone oxidoreductase subunit K, chloroplastic (225 aa).

Cysteine 43, cysteine 44, cysteine 108, and cysteine 139 together coordinate [4Fe-4S] cluster.

It belongs to the complex I 20 kDa subunit family. As to quaternary structure, NDH is composed of at least 16 different subunits, 5 of which are encoded in the nucleus. It depends on [4Fe-4S] cluster as a cofactor.

Its subcellular location is the plastid. The protein resides in the chloroplast thylakoid membrane. The enzyme catalyses a plastoquinone + NADH + (n+1) H(+)(in) = a plastoquinol + NAD(+) + n H(+)(out). It catalyses the reaction a plastoquinone + NADPH + (n+1) H(+)(in) = a plastoquinol + NADP(+) + n H(+)(out). Its function is as follows. NDH shuttles electrons from NAD(P)H:plastoquinone, via FMN and iron-sulfur (Fe-S) centers, to quinones in the photosynthetic chain and possibly in a chloroplast respiratory chain. The immediate electron acceptor for the enzyme in this species is believed to be plastoquinone. Couples the redox reaction to proton translocation, and thus conserves the redox energy in a proton gradient. This Hordeum vulgare (Barley) protein is NAD(P)H-quinone oxidoreductase subunit K, chloroplastic.